We begin with the raw amino-acid sequence, 565 residues long: Bifunctional dihydrofolate reductase-thymidylate synthase 2 (565 aa).

The 178-residue stretch at 65–242 folds into the DHFR domain; that stretch reads TYQVVVAATK…LRFSFTTHVR (178 aa). Valine 69 is a substrate binding site. NADP(+) is bound by residues alanine 71 and 77-83; that span reads GIGKDGK. Aspartate 91 serves as a coordination point for substrate. Residues 115–117 and 136–139 contribute to the NADP(+) site; these read RKT and LSRS. A substrate-binding site is contributed by isoleucine 178. Residue 179–186 participates in NADP(+) binding; sequence GGGDILRE. Residue threonine 199 coordinates substrate. A hinge region spans residues 245–280; that stretch reads SSSAGEASDESDGSKVLQVDWKKFSSVLPKMIFDRH. Positions 281 to 565 are thymidylate synthase; sequence EEYLYLNLVK…HKKIDMKMAV (285 aa). Arginine 302 provides a ligand contact to dUMP. The active site involves cysteine 447. DUMP is bound by residues histidine 448, 466 to 470, asparagine 478, and 508 to 510; these read QRSAD and HVY.

The protein in the N-terminal section; belongs to the dihydrofolate reductase family. It in the C-terminal section; belongs to the thymidylate synthase family. As to quaternary structure, heterodimer or homodimer.

It catalyses the reaction (6S)-5,6,7,8-tetrahydrofolate + NADP(+) = 7,8-dihydrofolate + NADPH + H(+). The catalysed reaction is dUMP + (6R)-5,10-methylene-5,6,7,8-tetrahydrofolate = 7,8-dihydrofolate + dTMP. The protein operates within cofactor biosynthesis; tetrahydrofolate biosynthesis; 5,6,7,8-tetrahydrofolate from 7,8-dihydrofolate: step 1/1. Bifunctional enzyme. Involved in de novo dTMP biosynthesis. Key enzyme in folate metabolism. Can play two different roles depending on the source of dihydrofolate: de novo synthesis of tetrahydrofolate or recycling of the dihydrofolate released as one of the end products of the TS catalyzed reaction. Catalyzes an essential reaction for de novo glycine and purine synthesis, DNA precursor synthesis, and for the conversion of dUMP to dTMP. This chain is Bifunctional dihydrofolate reductase-thymidylate synthase 2 (THY-2), found in Arabidopsis thaliana (Mouse-ear cress).